Here is a 232-residue protein sequence, read N- to C-terminus: Phosphoribosylformylglycinamidine synthase subunit PurQ (232 aa).

A Glutamine amidotransferase type-1 domain is found at 2-232; sequence KIAILQFGGT…SMVDYITENF (231 aa). Cys-86 serves as the catalytic Nucleophile. Residues His-203 and Glu-205 contribute to the active site.

In terms of assembly, part of the FGAM synthase complex composed of 1 PurL, 1 PurQ and 2 PurS subunits.

The protein localises to the cytoplasm. The enzyme catalyses N(2)-formyl-N(1)-(5-phospho-beta-D-ribosyl)glycinamide + L-glutamine + ATP + H2O = 2-formamido-N(1)-(5-O-phospho-beta-D-ribosyl)acetamidine + L-glutamate + ADP + phosphate + H(+). It catalyses the reaction L-glutamine + H2O = L-glutamate + NH4(+). The protein operates within purine metabolism; IMP biosynthesis via de novo pathway; 5-amino-1-(5-phospho-D-ribosyl)imidazole from N(2)-formyl-N(1)-(5-phospho-D-ribosyl)glycinamide: step 1/2. In terms of biological role, part of the phosphoribosylformylglycinamidine synthase complex involved in the purines biosynthetic pathway. Catalyzes the ATP-dependent conversion of formylglycinamide ribonucleotide (FGAR) and glutamine to yield formylglycinamidine ribonucleotide (FGAM) and glutamate. The FGAM synthase complex is composed of three subunits. PurQ produces an ammonia molecule by converting glutamine to glutamate. PurL transfers the ammonia molecule to FGAR to form FGAM in an ATP-dependent manner. PurS interacts with PurQ and PurL and is thought to assist in the transfer of the ammonia molecule from PurQ to PurL. The polypeptide is Phosphoribosylformylglycinamidine synthase subunit PurQ (Methanosarcina barkeri (strain Fusaro / DSM 804)).